A 191-amino-acid polypeptide reads, in one-letter code: Vascular endothelial growth factor A (191 aa).

Residues 1–26 form the signal peptide; that stretch reads MNFLLTWIHWGLAALLYFHNAKVLQA. Disulfide bonds link cysteine 52-cysteine 94, cysteine 83-cysteine 128, and cysteine 87-cysteine 130. N-linked (GlcNAc...) asparagine glycosylation occurs at asparagine 101.

It belongs to the PDGF/VEGF growth factor family. In terms of assembly, homodimer; disulfide-linked. Also found as heterodimer with PGF. Expressed by the venom gland, and probably other tissues.

Its subcellular location is the secreted. Its function is as follows. Growth factor active in angiogenesis, vasculogenesis and endothelial cell growth. Induces endothelial cell proliferation, promotes cell migration, inhibits apoptosis and induces permeabilization of blood vessels. Binds to heparan sulfate and heparin. The sequence is that of Vascular endothelial growth factor A from Bitis gabonica (Gaboon adder).